Here is a 455-residue protein sequence, read N- to C-terminus: Chromosomal replication initiator protein DnaA (455 aa).

The segment at 1-82 is domain I, interacts with DnaA modulators; it reads MNRNTSSLWA…NPDFVVKLVE (82 aa). Positions 82-117 are domain II; that stretch reads EGVKPAPKQNNIVTTKQNAETAVDSEQHLQSVEFKT. The segment at 118 to 335 is domain III, AAA+ region; it reads GLNSNHLFEN…GALNRVIANA (218 aa). Residues G163, G165, K166, and T167 each coordinate ATP. Residues 336–455 are domain IV, binds dsDNA; the sequence is EFTGKTITID…WSNLIRTLSA (120 aa).

It belongs to the DnaA family. In terms of assembly, oligomerizes as a right-handed, spiral filament on DNA at oriC.

Its subcellular location is the cytoplasm. Its function is as follows. Plays an essential role in the initiation and regulation of chromosomal replication. ATP-DnaA binds to the origin of replication (oriC) to initiate formation of the DNA replication initiation complex once per cell cycle. Binds the DnaA box (a 9 base pair repeat at the origin) and separates the double-stranded (ds)DNA. Forms a right-handed helical filament on oriC DNA; dsDNA binds to the exterior of the filament while single-stranded (ss)DNA is stabiized in the filament's interior. The ATP-DnaA-oriC complex binds and stabilizes one strand of the AT-rich DNA unwinding element (DUE), permitting loading of DNA polymerase. After initiation quickly degrades to an ADP-DnaA complex that is not apt for DNA replication. Binds acidic phospholipids. This Actinobacillus succinogenes (strain ATCC 55618 / DSM 22257 / CCUG 43843 / 130Z) protein is Chromosomal replication initiator protein DnaA.